A 400-amino-acid chain; its full sequence is Elongation factor Tu (400 aa).

The region spanning 10–209 (KPHVNVGTIG…AVDSYIPTPE (200 aa)) is the tr-type G domain. The segment at 19–26 (GHVDHGKT) is G1. 19-26 (GHVDHGKT) lines the GTP pocket. Threonine 26 serves as a coordination point for Mg(2+). The segment at 60-64 (GITIS) is G2. The tract at residues 81–84 (DCPG) is G3. GTP contacts are provided by residues 81-85 (DCPGH) and 136-139 (NKAD). A G4 region spans residues 136 to 139 (NKAD). Residues 174–176 (SGL) are G5.

The protein belongs to the TRAFAC class translation factor GTPase superfamily. Classic translation factor GTPase family. EF-Tu/EF-1A subfamily. As to quaternary structure, monomer.

The protein localises to the cytoplasm. It catalyses the reaction GTP + H2O = GDP + phosphate + H(+). Functionally, GTP hydrolase that promotes the GTP-dependent binding of aminoacyl-tRNA to the A-site of ribosomes during protein biosynthesis. In Desulfitobacterium hafniense (strain DSM 10664 / DCB-2), this protein is Elongation factor Tu.